We begin with the raw amino-acid sequence, 354 residues long: MKLQTTYPSNNYPIFVEHGAIDHISTYIDQFDQSFILIDEHVNQYFADKFDDILSYENVHKVIIPAGEKTKTFEQYQETLEYILSHHVTRNTAIIAVGGGATGDFAGFVAATLLRGVHFIQVPTTILAHDSSVGGKVGINSKQGKNLIGAFYRPTAVIYDLDFLKTLPFEQILSGYAEVYKHALLNGESTTQEIEQHFKDREILQSLNGMDKYIAKGIETKLDIVVADEKEQGVRKFLNLGHTFGHAVEYNHKIAHGHAVMIGIIYQFIVANILFNSNHDIQHYINYLTKLGYPLETITDIDFETIYQYMLSDKKNDKQGVQMVLIKHFGDIVVQHIDQTTLQHACEQLKTYFK.

Residues 100–104, 124–125, K136, K145, and 163–166 each bind NAD(+); these read GATGD, TT, and FLKT. Residues E178, H242, and H256 each contribute to the Zn(2+) site.

This sequence belongs to the sugar phosphate cyclases superfamily. Dehydroquinate synthase family. It depends on NAD(+) as a cofactor. Co(2+) is required as a cofactor. The cofactor is Zn(2+).

It is found in the cytoplasm. It catalyses the reaction 7-phospho-2-dehydro-3-deoxy-D-arabino-heptonate = 3-dehydroquinate + phosphate. Its pathway is metabolic intermediate biosynthesis; chorismate biosynthesis; chorismate from D-erythrose 4-phosphate and phosphoenolpyruvate: step 2/7. In terms of biological role, catalyzes the conversion of 3-deoxy-D-arabino-heptulosonate 7-phosphate (DAHP) to dehydroquinate (DHQ). This Staphylococcus aureus (strain Mu50 / ATCC 700699) protein is 3-dehydroquinate synthase.